We begin with the raw amino-acid sequence, 189 residues long: Elongation factor P (189 aa).

Belongs to the elongation factor P family.

Its subcellular location is the cytoplasm. Its pathway is protein biosynthesis; polypeptide chain elongation. Involved in peptide bond synthesis. Stimulates efficient translation and peptide-bond synthesis on native or reconstituted 70S ribosomes in vitro. Probably functions indirectly by altering the affinity of the ribosome for aminoacyl-tRNA, thus increasing their reactivity as acceptors for peptidyl transferase. This Rhizobium leguminosarum bv. trifolii (strain WSM2304) protein is Elongation factor P.